Reading from the N-terminus, the 419-residue chain is DNA-directed RNA polymerase I subunit RPA49 (419 aa).

Residues Ser35 and Ser163 each carry the phosphoserine modification. N6-acetyllysine is present on Lys373. The interval 397 to 419 (GTLSLPLPPAQTSDRLAKRRKIT) is disordered.

This sequence belongs to the eukaryotic RPA49/POLR1E RNA polymerase subunit family. As to quaternary structure, component of the RNA polymerase I (Pol I) complex consisting of 13 subunits: a ten-subunit catalytic core composed of POLR1A/RPA1, POLR1B/RPA2, POLR1C/RPAC1, POLR1D/RPAC2, POLR1H/RPA12, POLR2E/RPABC1, POLR2F/RPABC2, POLR2H/RPABC3, POLR2K/RPABC4 and POLR2L/RPABC5; a mobile stalk subunit POLR1F/RPA43 protruding from the core and additional subunits homologous to general transcription factors POLR1E/RPA49 and POLR1G/RPA34. Forms a heterodimer with POLR1G/RPA34. Interacts with POLR1G. Also binds UBTF/UBF. Interacts with PWP1. In terms of processing, acetylated at Lys-373 by CREBBP/CBP, leading to decreased RNA polymerase I transcription. In normal conditions, deacetylated by SIRT7, promoting the association of RNA polymerase I with the rDNA promoter region and coding region. In response to stress, SIRT7 is released from nucleoli leading to hyperacetylation of POLR1E/PAF53 and decreased association of RNA polymerase I with the rDNA promoter region.

The protein resides in the nucleus. The protein localises to the nucleolus. Functionally, component of RNA polymerase I (Pol I), a DNA-dependent RNA polymerase which synthesizes ribosomal RNA precursors using the four ribonucleoside triphosphates as substrates. Appears to be involved in the formation of the initiation complex at the promoter by mediating the interaction between Pol I and UBTF/UBF. This is DNA-directed RNA polymerase I subunit RPA49 (POLR1E) from Homo sapiens (Human).